The following is a 175-amino-acid chain: MQSFRLHRINREITIKKIRLTGADGKQIGVVNFNEAIKQAEDLELDLVEISPNSDPPVCKIMNYGKFLYEKNKSTKEQKKKQKIIHIKEIKFRPGTDEGDYQVKLRNIIKFLNDGYKIKITLRFRGGELIHQQIGVRVLHRISQDLHDLMTVEIFPNKVEGRQMTMILAPKKKPV.

The protein belongs to the IF-3 family. Monomer.

The protein resides in the cytoplasm. Functionally, IF-3 binds to the 30S ribosomal subunit and shifts the equilibrium between 70S ribosomes and their 50S and 30S subunits in favor of the free subunits, thus enhancing the availability of 30S subunits on which protein synthesis initiation begins. This Blochmanniella floridana protein is Translation initiation factor IF-3.